Consider the following 242-residue polypeptide: Guanylate kinase (242 aa).

A Guanylate kinase-like domain is found at 22 to 200 (GLLIVMTGAS…AVRELQAVQR (179 aa)). 29 to 36 (GASGVGKG) provides a ligand contact to ATP.

This sequence belongs to the guanylate kinase family.

The protein resides in the cytoplasm. The enzyme catalyses GMP + ATP = GDP + ADP. Its function is as follows. Essential for recycling GMP and indirectly, cGMP. This chain is Guanylate kinase, found in Deinococcus geothermalis (strain DSM 11300 / CIP 105573 / AG-3a).